The primary structure comprises 281 residues: DegV domain-containing protein YqaC (281 aa).

A DegV domain is found at 3 to 279; sequence LAVITDSSAD…LNTVAYGISP (277 aa). Hexadecanoate-binding residues include T60 and S93.

Its function is as follows. May bind long-chain fatty acids, such as palmitate, and may play a role in lipid transport or fatty acid metabolism. The sequence is that of DegV domain-containing protein YqaC (yqaC) from Lactococcus lactis subsp. lactis (strain IL1403) (Streptococcus lactis).